A 1036-amino-acid chain; its full sequence is Histidine kinase 3 (1036 aa).

Topologically, residues 1–8 (MSLFHVLG) are extracellular. A helical transmembrane segment spans residues 9–29 (FGVKIGHLFWMLCCWFVSWFV). Residues 30 to 94 (DNGIEDKSGL…VKFNKAWWRK (65 aa)) lie on the Cytoplasmic side of the membrane. Residues 95 to 115 (LVVVWVVFWVLVSIWTFWYFS) form a helical membrane-spanning segment. At 116 to 399 (SQAMEKRKET…CRFKQKPPWP (284 aa)) the chain is on the extracellular side. Residues 163 to 389 (IPSAIDQRTF…GDPLRKHEMR (227 aa)) enclose the CHASE domain. A helical membrane pass occupies residues 400 to 420 (VLSMVTSFGILVIALLVAHII). At 421-1036 (HATVSRIHKV…FFNSPSDTES (616 aa)) the chain is on the cytoplasmic side. The 267-residue stretch at 457–723 (TVSHEIRTPM…TFTFTAVFSN (267 aa)) folds into the Histidine kinase domain. Histidine 460 carries the post-translational modification Phosphohistidine; by autocatalysis. 2 Response regulatory domains span residues 746–865 (KAVV…QRGL) and 891–1028 (KILI…SRFF). Aspartate 941 carries the post-translational modification 4-aspartylphosphate.

As to quaternary structure, interacts with AHK2, AHK4, AHP1, AHP2, AHP3, AHP5 and At5g43560. Post-translationally, autophosphorylated predominantly on His residues. Activation probably requires a transfer of a phosphate group between a His in the transmitter domain and an Asp of the receiver domain. Mostly expressed in leaves and flowers, and, to a lower extent, in roots, stems, and siliques, especially in the vascular tissues. Present in seedlings.

Its subcellular location is the cell membrane. The protein resides in the endoplasmic reticulum membrane. It carries out the reaction ATP + protein L-histidine = ADP + protein N-phospho-L-histidine.. Activated by cytokinins to initiate phosphorelay signaling. This cytokinin-mediated activation is repressed by the trans-zeatin antagonists 6-(2-hydroxy-3-methylbenzylamino)purine (PI-55) and 6-(2,5-Dihydroxybenzylamino)purine (LGR-991). Cytokinins (CK) receptor related to bacterial two-component regulators. Functions as a histidine kinase and transmits the stress signal to a downstream MAPK cascade. This protein undergoes an ATP-dependent autophosphorylation at a conserved histidine residue in the kinase core, and a phosphoryl group is then transferred to a conserved aspartate residue in the receiver domain. In the presence of cytokinin, feeds phosphate to phosphorelay-integrating histidine phosphotransfer protein (HPt) and activates subsequent cascade. Involved in meristems establishment in seedlings. Redundant negative regulator of drought and salt stress responses and abscisic acid (ABA) signaling. Together with AHK2, plays a negative regulatory role in cold stress signaling via inhibition of ABA response, occurring independently of the cold acclimation pathway. Redundant positive regulator of cytokinin signaling that regulates many developmental processes including seed germination, cell division, seed size, chlorophyll retention during leaf senescence, root repression and shoot promotion. Can interact with isoprenoid-type cytokinins trans-zeatin (tZ and tZR), cis-zeatin (cZ), dihydrozeatin (DZ), buta-2,3-dienyladenine (HA-8), penta-2,3-dienyladenine (HA-1), 4-methyl-penta-2,3-dienyladenine (HA-10), 4-hydroxy-2-butynyladenine (RM1), 2-propynyladenine (RM3), 2-butynyladenine (RM6), and cytokinin ribosides and ribotides. Together with AHK4, involved in the cytokinin-dependent responses to Pi starvation and sucrose stresses. Promotes cytokinin-mediated leaf longevity through a specific phosphorylation of the response regulator ARR2. Involved in alkamides (e.g. N-isobutyl decanamide) and N-acylethanolamides (NAE) signaling that control meristematic activity and differentiation processes during plant development. Contributes to vascular bundle formation and secondary growth in a cytokinin-dependent manner, probably by promoting the maintenance of mitotic activity and/or identity of procambial cells. Plays a role in the cytokinin-mediated repression of the iron uptake pathway. Required by the cytokinin-dependent flower development regulation pathway. This is Histidine kinase 3 (AHK3) from Arabidopsis thaliana (Mouse-ear cress).